Consider the following 187-residue polypeptide: Elongation factor P (187 aa).

Belongs to the elongation factor P family.

The protein resides in the cytoplasm. It functions in the pathway protein biosynthesis; polypeptide chain elongation. In terms of biological role, involved in peptide bond synthesis. Stimulates efficient translation and peptide-bond synthesis on native or reconstituted 70S ribosomes in vitro. Probably functions indirectly by altering the affinity of the ribosome for aminoacyl-tRNA, thus increasing their reactivity as acceptors for peptidyl transferase. The sequence is that of Elongation factor P from Roseobacter denitrificans (strain ATCC 33942 / OCh 114) (Erythrobacter sp. (strain OCh 114)).